The following is a 111-amino-acid chain: Nucleoid-associated protein NGK_1136 (111 aa).

This sequence belongs to the YbaB/EbfC family. As to quaternary structure, homodimer.

The protein localises to the cytoplasm. Its subcellular location is the nucleoid. In terms of biological role, binds to DNA and alters its conformation. May be involved in regulation of gene expression, nucleoid organization and DNA protection. In Neisseria gonorrhoeae (strain NCCP11945), this protein is Nucleoid-associated protein NGK_1136.